A 263-amino-acid polypeptide reads, in one-letter code: Urease accessory protein UreH (263 aa).

The protein belongs to the UreD family. As to quaternary structure, ureH, UreF and UreG form a complex that acts as a GTP-hydrolysis-dependent molecular chaperone, activating the urease apoprotein by helping to assemble the nickel containing metallocenter of UreC. The UreE protein probably delivers the nickel.

The protein resides in the cytoplasm. Functionally, required for maturation of urease via the functional incorporation of the urease nickel metallocenter. This Helicobacter acinonychis (strain Sheeba) protein is Urease accessory protein UreH.